The primary structure comprises 221 residues: GFP-like non-fluorescent chromoprotein (221 aa).

Residues 62-64 (QYG) constitute a cross-link (2-iminomethyl-5-imidazolinone (Gln-Gly)). (E)-2,3-didehydrotyrosine is present on Tyr63.

Belongs to the GFP family. As to quaternary structure, homotetramer. In terms of processing, contains a chromophore consisting of modified amino acid residues. The chromophore is formed by autocatalytic backbone condensation between Xaa-N and Gly-(N+2), oxidation of Tyr-(N+1) to didehydrotyrosine, and formation of a double bond to the alpha-amino nitrogen of residue Xaa-N. Maturation of the chromophore requires nothing other than molecular oxygen.

Its function is as follows. Thought to play a role in photoprotection of the coral's resident symbiont microalgae's photosystems from photoinhibition caused by high light levels found near the surface of coral reefs. This chain is GFP-like non-fluorescent chromoprotein, found in Montipora efflorescens (Pore coral).